The following is a 41-amino-acid chain: uncharacterized protein (41 aa).

It localises to the plastid. Its subcellular location is the chloroplast. This is an uncharacterized protein from Trieres chinensis (Marine centric diatom).